Consider the following 182-residue polypeptide: Cbp/p300-interacting transactivator 4 (182 aa).

Residues 22–129 (GPHAPRTLQP…PPPPPPALGC (108 aa)) form a disordered region. Polar residues predominate over residues 64–89 (SPVSFQPFPVSQSPGAGSTHLQSAAT). Residues 100–117 (AAAGGPSPLQPAPGAAAS) show a composition bias toward low complexity.

Belongs to the CITED family. Interacts via its C-terminal region with the CH1 domain of CREBBP and EP300. Interacts with all TFAP2/AP-2 isoforms. As to expression, strongly expressed in heart, spleen and testis, and weakly in liver and kidney.

The protein resides in the nucleus. It localises to the cytoplasm. In terms of biological role, acts as a transcriptional coactivator for TFAP2/AP-2. Enhances estrogen-dependent transactivation mediated by estrogen receptors. May function as an inhibitor of transactivation by HIF1A by disrupting HIF1A interaction with CREBBP. May be involved in regulation of gene expression during development and differentiation of blood cells, endothelial cells and mammary epithelial cells. The sequence is that of Cbp/p300-interacting transactivator 4 from Mus musculus (Mouse).